The following is a 71-amino-acid chain: Lantibiotic Flvbeta.c (71 aa).

Positions 1–33 are cleaved as a propeptide — cleaved by FlvT; that stretch reads MENKFDMEKFKKLAAVVSEDELDTLLDETTVGA. Residues 35–39 constitute a cross-link (lanthionine (Ser-Cys); by FlvM2); sequence SSNDC. S36 carries the 2,3-didehydroalanine (Ser); by FlvM2 modification. Cross-links (beta-methyllanthionine (Thr-Cys); by FlvM2) lie at residues 54–60, 62–65, and 66–69; these read TSKFDWC, TGAC, and TTSC.

Post-translationally, contains LL-lanthionine and DL-beta-methyllanthionine, when coepressed in E.coli with the flavecin synthetase FlvM2.

The protein resides in the secreted. Lanthionine-containing peptide antibiotic (lantibiotic) that is probably active on Gram-positive bacteria, since its analog [Del1]Flvbeta.c shows antibacterial activity against M.luteus. This activity is not synergistically enhanced by [Del2]Flvalpha.a, an analog of Flvalpha.a, which is encoded by the same operon than Flvbeta.c. The bactericidal activity of lantibiotics is based on depolarization of energized bacterial cytoplasmic membranes, initiated by the formation of aqueous transmembrane pores. The protein is Lantibiotic Flvbeta.c of Ruminococcus flavefaciens.